The following is a 202-amino-acid chain: Glycerol-3-phosphate acyltransferase (202 aa).

The next 6 membrane-spanning stretches (helical) occupy residues 3–23, 61–81, 87–107, 118–138, 144–164, and 167–187; these read NLII…LILA, IATI…LKFL, LLWS…YLLF, GAMI…WVVI, ISSL…FIFN, and LEIH…YKHL.

The protein belongs to the PlsY family. As to quaternary structure, probably interacts with PlsX.

It is found in the cell inner membrane. It catalyses the reaction an acyl phosphate + sn-glycerol 3-phosphate = a 1-acyl-sn-glycero-3-phosphate + phosphate. It functions in the pathway lipid metabolism; phospholipid metabolism. Its function is as follows. Catalyzes the transfer of an acyl group from acyl-phosphate (acyl-PO(4)) to glycerol-3-phosphate (G3P) to form lysophosphatidic acid (LPA). This enzyme utilizes acyl-phosphate as fatty acyl donor, but not acyl-CoA or acyl-ACP. This chain is Glycerol-3-phosphate acyltransferase, found in Campylobacter jejuni subsp. jejuni serotype O:6 (strain 81116 / NCTC 11828).